We begin with the raw amino-acid sequence, 531 residues long: Zinc finger C2HC domain-containing protein 1C (531 aa).

Residues 16 to 45 (MLPHNTTEAPGPHSAKQDSYEQSDSSQQSL) form a disordered region. Residues 35-44 (YEQSDSSQQS) show a composition bias toward low complexity. Residues 209–264 (VQIRRLEAAGESLEEEIRRKQILLRGKLKKTEEELRRIQTQKEQAKENENRELQKI) are a coiled coil. Disordered regions lie at residues 290 to 318 (FEEE…QLSD) and 334 to 387 (NKIR…PQLG). Residues 293 to 305 (EFSRDKREDETWE) are compositionally biased toward basic and acidic residues. A compositionally biased stretch (polar residues) spans 306-315 (RSQQNSSPFQ). The span at 335 to 345 (KIRDRVSEPSM) shows a compositional bias: basic and acidic residues. Low complexity predominate over residues 366 to 380 (SSLSMAPDSSGSSGS). C2HC/C3H-type zinc fingers lie at residues 385–414 (QLGE…MQGS) and 493–522 (DYIQ…IKNR). Zn(2+)-binding residues include C389, C392, H404, C408, C497, C500, H512, and C516.

It belongs to the ZC2HC1 family. Zn(2+) serves as cofactor.

In Macaca fascicularis (Crab-eating macaque), this protein is Zinc finger C2HC domain-containing protein 1C (ZC2HC1C).